We begin with the raw amino-acid sequence, 345 residues long: Ribosomal RNA large subunit methyltransferase F (345 aa).

The span at Met1–Asn14 shows a compositional bias: polar residues. Disordered stretches follow at residues Met1 to His35 and Glu225 to Gln258. A compositionally biased stretch (basic residues) spans Arg229–Gly239. The segment covering Ile246–Gln258 has biased composition (polar residues).

It belongs to the methyltransferase superfamily. METTL16/RlmF family.

The protein resides in the cytoplasm. The catalysed reaction is adenosine(1618) in 23S rRNA + S-adenosyl-L-methionine = N(6)-methyladenosine(1618) in 23S rRNA + S-adenosyl-L-homocysteine + H(+). Specifically methylates the adenine in position 1618 of 23S rRNA. The polypeptide is Ribosomal RNA large subunit methyltransferase F (Psychrobacter arcticus (strain DSM 17307 / VKM B-2377 / 273-4)).